Consider the following 148-residue polypeptide: NHMESHKLTSKAEKAIECDECGKHFSHAGALFTHKMVHKEKGANKMHKCKFCEYETAEQGLLNRHLLAVHSKNFPHICVECGKGFRHPSELKKHMRIHTGEKPYQCQYCEYRSADSSNLKTHVKTKHSKEMPFKCDICLLTFSDTKEV.

C2H2-type zinc fingers lie at residues Ile16 to His38 and His76 to His98.

This sequence belongs to the krueppel C2H2-type zinc-finger protein family. ZFX/ZFY subfamily.

It localises to the nucleus. Functionally, probable transcriptional activator. The polypeptide is Zinc finger X-chromosomal protein (ZFX) (Sus scrofa (Pig)).